We begin with the raw amino-acid sequence, 485 residues long: Acetyl-coenzyme A carboxylase carboxyl transferase subunit beta, chloroplastic (485 aa).

The CoA carboxyltransferase N-terminal domain maps to 218-485 (LWIQCDNCYA…FFPLNKNEIK (268 aa)). Residues C222, C225, C241, and C244 each contribute to the Zn(2+) site. The C4-type zinc-finger motif lies at 222-244 (CDNCYALIYKKALKFKMNVCEQC).

Belongs to the AccD/PCCB family. In terms of assembly, acetyl-CoA carboxylase is a heterohexamer composed of biotin carboxyl carrier protein, biotin carboxylase and 2 subunits each of ACCase subunit alpha and ACCase plastid-coded subunit beta (accD). Requires Zn(2+) as cofactor.

It localises to the plastid. Its subcellular location is the chloroplast stroma. It catalyses the reaction N(6)-carboxybiotinyl-L-lysyl-[protein] + acetyl-CoA = N(6)-biotinyl-L-lysyl-[protein] + malonyl-CoA. It participates in lipid metabolism; malonyl-CoA biosynthesis; malonyl-CoA from acetyl-CoA: step 1/1. Component of the acetyl coenzyme A carboxylase (ACC) complex. Biotin carboxylase (BC) catalyzes the carboxylation of biotin on its carrier protein (BCCP) and then the CO(2) group is transferred by the transcarboxylase to acetyl-CoA to form malonyl-CoA. This is Acetyl-coenzyme A carboxylase carboxyl transferase subunit beta, chloroplastic from Aethionema cordifolium (Lebanon stonecress).